Reading from the N-terminus, the 513-residue chain is Calcium-dependent protein kinase 2 (513 aa).

Residues 65-323 (YSFGKELGRG…SAQVLQHQWL (259 aa)) enclose the Protein kinase domain. ATP is bound by residues 71-79 (LGRGQFGVT) and Lys94. Asp189 functions as the Proton acceptor in the catalytic mechanism. Residues 329-359 (ASDKPIDSAVLSRMKQFRAMNKLKKMALKVI) form an autoinhibitory domain region. EF-hand domains follow at residues 366–401 (EEIK…LGSK), 402–437 (LSEA…RHKL), 438–473 (ERDE…HEMG), and 478–508 (IREI…GMQQ). Ca(2+)-binding residues include Asp379, Asp381, Ser383, Thr385, Glu390, Asp415, Asp417, Asn419, Ser421, Glu426, Asp451, Asp453, Ser455, Glu462, Asp486, Asp488, Asp490, Arg492, and Glu497.

The protein belongs to the protein kinase superfamily. Ser/Thr protein kinase family. CDPK subfamily.

The catalysed reaction is L-seryl-[protein] + ATP = O-phospho-L-seryl-[protein] + ADP + H(+). It carries out the reaction L-threonyl-[protein] + ATP = O-phospho-L-threonyl-[protein] + ADP + H(+). With respect to regulation, activated by calcium. Autophosphorylation may play an important role in the regulation of the kinase activity. Its function is as follows. May play a role in signal transduction pathways that involve calcium as a second messenger. The chain is Calcium-dependent protein kinase 2 (CPK2) from Zea mays (Maize).